We begin with the raw amino-acid sequence, 274 residues long: MEFLKMHGLGNDFVVVDEIKNQNLVNKNLSDLAKKICDRRFGIGADGLVLLLPSEKADFKMRIINSDGSEAEMCGNAIRCVARYYVEKYNPAKKQLEVETLAGIIKPEVLENNMVRVDMGRPILKPQEIPVAVEEEPVNIPLEVLGQKFYFTAVSMGNPHAVIFVDSLAKIELEKYGPLIETHPLFPRKTNVEFVEILSPAKVKVFVWERGAGATLACGTGASAVVVAGRILGHLQEDVEVVLPGGSLFINWVFGESVYMTGPAEIVFKGEYFL.

Substrate is bound by residues Asn-11 and Asn-65. Cys-74 acts as the Proton donor in catalysis. Substrate contacts are provided by residues 75–76 (GN), Asn-158, Asn-191, and 209–210 (ER). Cys-218 acts as the Proton acceptor in catalysis. 219-220 (GT) contributes to the substrate binding site.

The protein belongs to the diaminopimelate epimerase family. Homodimer.

Its subcellular location is the cytoplasm. The catalysed reaction is (2S,6S)-2,6-diaminopimelate = meso-2,6-diaminopimelate. It functions in the pathway amino-acid biosynthesis; L-lysine biosynthesis via DAP pathway; DL-2,6-diaminopimelate from LL-2,6-diaminopimelate: step 1/1. In terms of biological role, catalyzes the stereoinversion of LL-2,6-diaminopimelate (L,L-DAP) to meso-diaminopimelate (meso-DAP), a precursor of L-lysine and an essential component of the bacterial peptidoglycan. In Carboxydothermus hydrogenoformans (strain ATCC BAA-161 / DSM 6008 / Z-2901), this protein is Diaminopimelate epimerase.